The primary structure comprises 196 residues: Peptidyl-tRNA hydrolase (196 aa).

Tyr17 lines the tRNA pocket. Catalysis depends on His22, which acts as the Proton acceptor. TRNA contacts are provided by Phe68, Asn70, and Asn116.

The protein belongs to the PTH family. As to quaternary structure, monomer.

It localises to the cytoplasm. The catalysed reaction is an N-acyl-L-alpha-aminoacyl-tRNA + H2O = an N-acyl-L-amino acid + a tRNA + H(+). Functionally, hydrolyzes ribosome-free peptidyl-tRNAs (with 1 or more amino acids incorporated), which drop off the ribosome during protein synthesis, or as a result of ribosome stalling. In terms of biological role, catalyzes the release of premature peptidyl moieties from peptidyl-tRNA molecules trapped in stalled 50S ribosomal subunits, and thus maintains levels of free tRNAs and 50S ribosomes. In Yersinia pseudotuberculosis serotype O:1b (strain IP 31758), this protein is Peptidyl-tRNA hydrolase.